Here is a 667-residue protein sequence, read N- to C-terminus: METLESELTCPICLELFEDPLLLPCAHSLCFNCAHRILVSHCATNESVESITAFQCPTCRHVITLSQRGLDGLKRNVTLQNIIDRFQKASVSGPNSPSETRRERAFDANTMTSAEKVLCQFCDQDPAQDAVKTCVTCEVSYCDECLKATHPNKKPFTGHRLIEPIPDSHIRGLMCLEHEDEKVNMYCVTDDQLICALCKLVGRHRDHQVAALSERYDKLKQNLESNLTNLIKRNTELETLLAKLIQTCQHVEVNASRQEAKLTEECDLLIEIIQQRRQIIGTKIKEGKVMRLRKLAQQIANCKQCIERSASLISQAEHSLKENDHARFLQTAKNITERVSMATASSQVLIPEINLNDTFDTFALDFSREKKLLECLDYLTAPNPPTIREELCTASYDTITVHWTSDDEFSVVSYELQYTIFTGQANVVSLCNSADSWMIVPNIKQNHYTVHGLQSGTKYIFMVKAINQAGSRSSEPGKLKTNSQPFKLDPKSAHRKLKVSHDNLTVERDESSSKKSHTPERFTSQGSYGVAGNVFIDSGRHYWEVVISGSTWYAIGLAYKSAPKHEWIGKNSASWALCRCNNNWVVRHNSKEIPIEPAPHLRRVGILLDYDNGSIAFYDALNSIHLYTFDVAFAQPVCPTFTVWNKCLTIITGLPIPDHLDCTEQLP.

The segment at 10–60 adopts an RING-type zinc-finger fold; sequence CPICLELFEDPLLLPCAHSLCFNCAHRILVSHCATNESVESITAFQCPTCR. Phosphoserine is present on residues Ser92 and Ser96. B box-type zinc fingers lie at residues 116-165 and 172-212; these read KVLC…IEPI and GLMC…VAAL. Zn(2+)-binding residues include Cys119, Cys122, Cys134, Cys137, Cys142, Cys145, His150, His159, Cys175, His178, Cys198, and His204. Residues 205-264 adopt a coiled-coil conformation; it reads RDHQVAALSERYDKLKQNLESNLTNLIKRNTELETLLAKLIQTCQHVEVNASRQEAKLTE. A COS domain is found at 320 to 379; sequence LKENDHARFLQTAKNITERVSMATASSQVLIPEINLNDTFDTFALDFSREKKLLECLDYL. Residues 381–484 form the Fibronectin type-III domain; sequence APNPPTIREE…EPGKLKTNSQ (104 aa). Residues 471 to 485 show a composition bias toward polar residues; it reads SRSSEPGKLKTNSQP. Residues 471 to 524 are disordered; sequence SRSSEPGKLKTNSQPFKLDPKSAHRKLKVSHDNLTVERDESSSKKSHTPERFTS. A B30.2/SPRY domain is found at 482–659; that stretch reads NSQPFKLDPK…IITGLPIPDH (178 aa). Over residues 499 to 520 the composition is skewed to basic and acidic residues; that stretch reads VSHDNLTVERDESSSKKSHTPE. Ser511 bears the Phosphoserine mark.

The protein belongs to the TRIM/RBCC family. In terms of assembly, homodimer or heterodimer with MID2. Interacts with IGBP1. Interacts with TRIM16. Phosphorylated on serine and threonine residues. As to expression, in the fetus, highest expression found in kidney, followed by brain and lung. Expressed at low levels in fetal liver. In the adult, most abundant in heart, placenta and brain.

The protein resides in the cytoplasm. It is found in the cytoskeleton. Its subcellular location is the spindle. It catalyses the reaction S-ubiquitinyl-[E2 ubiquitin-conjugating enzyme]-L-cysteine + [acceptor protein]-L-lysine = [E2 ubiquitin-conjugating enzyme]-L-cysteine + N(6)-ubiquitinyl-[acceptor protein]-L-lysine.. Functionally, has E3 ubiquitin ligase activity towards IGBP1, promoting its monoubiquitination, which results in deprotection of the catalytic subunit of protein phosphatase PP2A, and its subsequent degradation by polyubiquitination. The polypeptide is E3 ubiquitin-protein ligase Midline-1 (MID1) (Homo sapiens (Human)).